The primary structure comprises 227 residues: MIRLVLLDIEGTTLPISFVRDVMFPYAAKALPALMQDHTNPIVVGARADIVMEHPGQDPLKVCQDWMKADVKAAPLKTLQGLTWRQGFEDGTLQADLYPDVPPALKAWSKGGLRLAVYSSGSIPSQKLLYGHTAQGDLTPLFEDFFDLSTGGKKDAASYEKITAAVGLPADEILFLSDIGAELDAAQRAGLSVCQLVREQDGTVPHPGVPQAPDLNAVSTQFGLPVA.

It belongs to the HAD-like hydrolase superfamily. MasA/MtnC family. In terms of assembly, monomer. The cofactor is Mg(2+).

The enzyme catalyses 5-methylsulfanyl-2,3-dioxopentyl phosphate + H2O = 1,2-dihydroxy-5-(methylsulfanyl)pent-1-en-3-one + phosphate. Its pathway is amino-acid biosynthesis; L-methionine biosynthesis via salvage pathway; L-methionine from S-methyl-5-thio-alpha-D-ribose 1-phosphate: step 3/6. It participates in amino-acid biosynthesis; L-methionine biosynthesis via salvage pathway; L-methionine from S-methyl-5-thio-alpha-D-ribose 1-phosphate: step 4/6. Its function is as follows. Bifunctional enzyme that catalyzes the enolization of 2,3-diketo-5-methylthiopentyl-1-phosphate (DK-MTP-1-P) into the intermediate 2-hydroxy-3-keto-5-methylthiopentenyl-1-phosphate (HK-MTPenyl-1-P), which is then dephosphorylated to form the acireductone 1,2-dihydroxy-3-keto-5-methylthiopentene (DHK-MTPene). This Gluconobacter oxydans (strain 621H) (Gluconobacter suboxydans) protein is Enolase-phosphatase E1.